The sequence spans 753 residues: Polyadenylate-binding protein, cytoplasmic and nuclear (753 aa).

Positions 1–43 are enriched in low complexity; it reads MSAEASTTPAAETPVNGTPETSTTPAAPAAEATAAETAAPSTS. Residues 1–49 form a disordered region; the sequence is MSAEASTTPAAETPVNGTPETSTTPAAPAAEATAAETAAPSTSQPHSAS. 4 consecutive RRM domains span residues 48–126, 136–213, 229–306, and 332–460; these read ASLY…WSQR, GNVF…HHIS, TNVY…RAQK, and VNLY…LAQR. Disordered regions lie at residues 363-417, 607-649, and 727-753; these read VMRD…SDKK, RGPG…PAAG, and GTEG…ENKS. Residues 376 to 417 show a composition bias toward basic and acidic residues; the sequence is DSDKEKKEESKEEKPEAAEKTEEAAKESGDDQDKENKKSDKK. Gly residues predominate over residues 607-619; that stretch reads RGPGYGQGRGGVP. Low complexity predominate over residues 633 to 649; the sequence is QNAQPAAGRGEEAPAAG. The region spanning 647-724 is the PABC domain; that stretch reads AAGLTAQSLA…ALSVYDEYMK (78 aa). The segment covering 737–753 has biased composition (basic and acidic residues); it reads PKPKEAATEESTEENKS.

Belongs to the polyadenylate-binding protein type-1 family.

Its subcellular location is the cytoplasm. It is found in the nucleus. Functionally, binds the poly(A) tail of mRNA. Appears to be an important mediator of the multiple roles of the poly(A) tail in mRNA biogenesis, stability and translation. In the nucleus, involved in both mRNA cleavage and polyadenylation. Is also required for efficient mRNA export to the cytoplasm. Acts in concert with a poly(A)-specific nuclease (PAN) to affect poly(A) tail shortening, which may occur concomitantly with either nucleocytoplasmic mRNA transport or translational initiation. In the cytoplasm, stimulates translation initiation and regulates mRNA decay through translation termination-coupled poly(A) shortening, probably mediated by PAN. This chain is Polyadenylate-binding protein, cytoplasmic and nuclear (pab1), found in Aspergillus terreus (strain NIH 2624 / FGSC A1156).